The sequence spans 283 residues: Phosphatidylserine decarboxylase proenzyme (283 aa).

Catalysis depends on charge relay system; for autoendoproteolytic cleavage activity residues D96, H152, and S250. The Schiff-base intermediate with substrate; via pyruvic acid; for decarboxylase activity role is filled by S250. Residue S250 is modified to Pyruvic acid (Ser); by autocatalysis.

This sequence belongs to the phosphatidylserine decarboxylase family. PSD-B subfamily. Prokaryotic type I sub-subfamily. As to quaternary structure, heterodimer of a large membrane-associated beta subunit and a small pyruvoyl-containing alpha subunit. Pyruvate serves as cofactor. Is synthesized initially as an inactive proenzyme. Formation of the active enzyme involves a self-maturation process in which the active site pyruvoyl group is generated from an internal serine residue via an autocatalytic post-translational modification. Two non-identical subunits are generated from the proenzyme in this reaction, and the pyruvate is formed at the N-terminus of the alpha chain, which is derived from the carboxyl end of the proenzyme. The autoendoproteolytic cleavage occurs by a canonical serine protease mechanism, in which the side chain hydroxyl group of the serine supplies its oxygen atom to form the C-terminus of the beta chain, while the remainder of the serine residue undergoes an oxidative deamination to produce ammonia and the pyruvoyl prosthetic group on the alpha chain. During this reaction, the Ser that is part of the protease active site of the proenzyme becomes the pyruvoyl prosthetic group, which constitutes an essential element of the active site of the mature decarboxylase.

It localises to the cell membrane. The enzyme catalyses a 1,2-diacyl-sn-glycero-3-phospho-L-serine + H(+) = a 1,2-diacyl-sn-glycero-3-phosphoethanolamine + CO2. The protein operates within phospholipid metabolism; phosphatidylethanolamine biosynthesis; phosphatidylethanolamine from CDP-diacylglycerol: step 2/2. Catalyzes the formation of phosphatidylethanolamine (PtdEtn) from phosphatidylserine (PtdSer). This is Phosphatidylserine decarboxylase proenzyme from Acinetobacter baumannii (strain ACICU).